A 189-amino-acid chain; its full sequence is UPF0301 protein PFL_5830 (189 aa).

Belongs to the UPF0301 (AlgH) family.

The polypeptide is UPF0301 protein PFL_5830 (Pseudomonas fluorescens (strain ATCC BAA-477 / NRRL B-23932 / Pf-5)).